We begin with the raw amino-acid sequence, 346 residues long: tRNA N6-adenosine threonylcarbamoyltransferase (346 aa).

Histidine 117 and histidine 121 together coordinate Fe cation. Substrate-binding positions include 139-143 (VVSGG), aspartate 172, glycine 185, aspartate 189, and asparagine 278. Residue aspartate 307 coordinates Fe cation.

The protein belongs to the KAE1 / TsaD family. May form a heterodimer with TsaB. Requires Fe(2+) as cofactor.

It is found in the cytoplasm. The catalysed reaction is L-threonylcarbamoyladenylate + adenosine(37) in tRNA = N(6)-L-threonylcarbamoyladenosine(37) in tRNA + AMP + H(+). In terms of biological role, required for the formation of a threonylcarbamoyl group on adenosine at position 37 (t(6)A37) in tRNAs that read codons beginning with adenine. Is involved in the transfer of the threonylcarbamoyl moiety of threonylcarbamoyl-AMP (TC-AMP) to the N6 group of A37, together with TsaE and TsaB; this reaction does not require ATP in vitro. TsaD likely plays a direct catalytic role in this reaction. In Bacillus subtilis (strain 168), this protein is tRNA N6-adenosine threonylcarbamoyltransferase.